A 231-amino-acid chain; its full sequence is MKRAVVVFSGGQDSTTCLIQALHQYDEVHCVTFDYGQRHRAEIDVARELALKLGARAHKVLDVTLLNELAVSSLTRDSIPVPDYEPDADGIPNTFVPGRNILFLTLTAIYAYQVKAEAIITGVCETDFSGYPDCRDEFVKALNHAVDLGMAKEIRFETPLMWLDKAETWALADYWEKLELVRTETLTCYNGIKGDGCGQCAACNLRSNGLNHYLANKPAVMSAMKAKTGLK.

8 to 18 contacts ATP; sequence FSGGQDSTTCL. Residues Cys188, Cys197, Cys200, and Cys203 each contribute to the Zn(2+) site.

Belongs to the QueC family. Zn(2+) serves as cofactor.

It catalyses the reaction 7-carboxy-7-deazaguanine + NH4(+) + ATP = 7-cyano-7-deazaguanine + ADP + phosphate + H2O + H(+). Its pathway is purine metabolism; 7-cyano-7-deazaguanine biosynthesis. Its function is as follows. Catalyzes the ATP-dependent conversion of 7-carboxy-7-deazaguanine (CDG) to 7-cyano-7-deazaguanine (preQ(0)). This is 7-cyano-7-deazaguanine synthase from Enterobacter sp. (strain 638).